Reading from the N-terminus, the 206-residue chain is LexA repressor (206 aa).

The H-T-H motif DNA-binding region spans 28-48; sequence VREIGQAVGLASSSTVHGHLS. Catalysis depends on for autocatalytic cleavage activity residues serine 128 and lysine 166.

It belongs to the peptidase S24 family. As to quaternary structure, homodimer.

It catalyses the reaction Hydrolysis of Ala-|-Gly bond in repressor LexA.. Its function is as follows. Represses a number of genes involved in the response to DNA damage (SOS response), including recA and lexA. In the presence of single-stranded DNA, RecA interacts with LexA causing an autocatalytic cleavage which disrupts the DNA-binding part of LexA, leading to derepression of the SOS regulon and eventually DNA repair. The chain is LexA repressor from Bacillus cytotoxicus (strain DSM 22905 / CIP 110041 / 391-98 / NVH 391-98).